Here is an 848-residue protein sequence, read N- to C-terminus: Aryl hydrocarbon receptor (848 aa).

At methionine 1 the chain carries N-acetylmethionine. A propeptide spanning residues 1 to 10 (MNSSSANITY) is cleaved from the precursor. Positions 1–10 (MNSSSANITY) are enriched in polar residues. Residues 1 to 39 (MNSSSANITYASRKRRKPVQKTVKPIPAEGIKSNPSKRH) form a disordered region. Short sequence motifs (nuclear localization signal) lie at residues 13-16 (RKRR) and 37-42 (KRHRDR). Positions 27–80 (PAEGIKSNPSKRHRDRLNTELDRLASLLPFPQDVINKLDKLSVLRLSVSYLRAK) constitute a bHLH domain. Residues 38–66 (RHRDRLNTELDRLASLLPFPQDVINKLDK) are DNA-binding. 3 required for maintaining the overall integrity of the AHR:ARNT heterodimer and its transcriptional activity regions span residues 50–82 (LASLLPFPQDVINKLDKLSVLRLSVSYLRAKSF), 118–126 (LLQALNGFV), and 266–268 (FAI). Positions 64-72 (LDKLSVLRL) match the Nuclear export signal motif. Residues 111–181 (NLQEGEFLLQ…RQLHWALNPS (71 aa)) form the PAS 1 domain. Residues 275-342 (PSILEIRTKN…CAESHIRMIK (68 aa)) form the PAS 2 domain. One can recognise a PAC domain in the interval 348 to 386 (MIVFRLLTKNNRWTWVQSNARLLYKNGRPDYIIVTQRPL). The interval 824 to 848 (TTHLQPLHHPSEARPFPDLTSSGFL) is disordered.

Homodimer. Heterodimer; efficient DNA binding requires dimerization with another bHLH protein. Interacts with ARNT; the heterodimer ARNT:AHR binds to core DNA sequence 5'-TGCGTG-3' within the dioxin response element (DRE) of target gene promoters and activates their transcription. Binds MYBBP1A. Interacts with coactivators including SRC-1, RIP140 and NOCA7, and with the corepressor SMRT. Interacts with NEDD8 and IVNS1ABP. Interacts with BMAL1. Interacts with HSP90AB1. Interacts with TIPARP; leading to mono-ADP-ribosylation of AHR and subsequent inhibition of AHR. Post-translationally, mono-ADP-ribosylated, leading to inhibit transcription activator activity of AHR. Expressed in all tissues tested including blood, brain, heart, kidney, liver, lung, pancreas and skeletal muscle. Expressed in retinal photoreceptors.

The protein resides in the cytoplasm. The protein localises to the nucleus. Ligand-activated transcription factor that enables cells to adapt to changing conditions by sensing compounds from the environment, diet, microbiome and cellular metabolism, and which plays important roles in development, immunity and cancer. Upon ligand binding, translocates into the nucleus, where it heterodimerizes with ARNT and induces transcription by binding to xenobiotic response elements (XRE). Regulates a variety of biological processes, including angiogenesis, hematopoiesis, drug and lipid metabolism, cell motility and immune modulation. Xenobiotics can act as ligands: upon xenobiotic-binding, activates the expression of multiple phase I and II xenobiotic chemical metabolizing enzyme genes (such as the CYP1A1 gene). Mediates biochemical and toxic effects of halogenated aromatic hydrocarbons. Next to xenobiotics, natural ligands derived from plants, microbiota, and endogenous metabolism are potent AHR agonists. Tryptophan (Trp) derivatives constitute an important class of endogenous AHR ligands. Acts as a negative regulator of anti-tumor immunity: indoles and kynurenic acid generated by Trp catabolism act as ligand and activate AHR, thereby promoting AHR-driven cancer cell motility and suppressing adaptive immunity. Regulates the circadian clock by inhibiting the basal and circadian expression of the core circadian component PER1. Inhibits PER1 by repressing the CLOCK-BMAL1 heterodimer mediated transcriptional activation of PER1. The heterodimer ARNT:AHR binds to core DNA sequence 5'-TGCGTG-3' within the dioxin response element (DRE) of target gene promoters and activates their transcription. The protein is Aryl hydrocarbon receptor of Homo sapiens (Human).